Reading from the N-terminus, the 733-residue chain is Sulfate transporter (733 aa).

The segment covering 1–18 (MSLKNEEQNDLSPKDSVK) has biased composition (basic and acidic residues). The tract at residues 1 to 37 (MSLKNEEQNDLSPKDSVKGNDQYRAPSGIHLEREEES) is disordered. 2 positions are modified to phosphoserine: serine 12 and serine 16. Transmembrane regions (helical) follow at residues 113–133 (VMSG…YSLL) and 138–158 (PIYG…LGTS). N-linked (GlcNAc...) asparagine glycosylation is present at asparagine 194. Transmembrane regions (helical) follow at residues 214 to 234 (IIVG…MGFF), 237 to 257 (GFVS…GASF), 379 to 399 (IDAI…SEMF), 415 to 435 (AIGF…SAAL), 453 to 473 (VMTA…FFSL), and 519 to 539 (LIST…CVIL). Positions 563–714 (AYKNLQAKSG…SVYEAMTFAE (152 aa)) constitute an STAS domain.

Belongs to the SLC26A/SulP transporter (TC 2.A.53) family. In terms of processing, N-glycosylated.

The protein resides in the cell membrane. It localises to the apical cell membrane. It catalyses the reaction oxalate(in) + sulfate(out) = oxalate(out) + sulfate(in). The catalysed reaction is sulfate(out) + 2 chloride(in) = sulfate(in) + 2 chloride(out). The enzyme catalyses oxalate(out) + 2 chloride(in) = oxalate(in) + 2 chloride(out). It carries out the reaction bromide(in) + chloride(out) = bromide(out) + chloride(in). It catalyses the reaction nitrate(in) + chloride(out) = nitrate(out) + chloride(in). The catalysed reaction is iodide(in) + chloride(out) = iodide(out) + chloride(in). Functionally, sulfate transporter which mediates sulfate uptake into chondrocytes in order to maintain adequate sulfation of proteoglycans which is needed for cartilage development. Mediates electroneutral anion exchange of sulfate ions for oxalate ions, sulfate and oxalate ions for chloride and/or hydroxyl ions and chloride ions for bromide, iodide and nitrate ions. The coupling of sulfate transport to both hydroxyl and chloride ions likely serves to ensure transport at both acidic pH when most sulfate uptake is mediated by sulfate-hydroxide exchange and alkaline pH when most sulfate uptake is mediated by sulfate-chloride exchange. Essential for chondrocyte proliferation, differentiation and cell size expansion. In Bubalus bubalis (Domestic water buffalo), this protein is Sulfate transporter (SLC26A2).